The primary structure comprises 422 residues: MDFLEIVGQIPLKGGVEISGAKNSALPILAATLLSQQEVTISALPQVADIKAMASLLQNLGAELDWFNSHTLKLCAKSLRHTEATYDLVRKMRASILVLGPLLARFKECLVSLPGGCAIGARPVDLHLKAMQQLGAEITIEQGYIHAKAAKGLKGNDILFDKISVTGTENALMAASLAKGITRIINAAKEPEIAQLCTFLQSGGVEIEGVGSSELKIRGVESDALSLKDIQIIPDRIEAGTYLCVGAITNSQLKINHIIPNHLQAITDKLIEIGFPLDIQQNSIEIYPAKKRQAFEITTKEYPGFPTDMQAQFMALATQCLGTSVIEETLFENRFMHASELQRLGANISLKTNIATIHGSTELTGSDVMATDLRASSALILAALVAKGVSRVHRIYHLDRGYERLEDKINALGAKVLRLKEK.

22–23 (KN) lines the phosphoenolpyruvate pocket. Arginine 93 contributes to the UDP-N-acetyl-alpha-D-glucosamine binding site. Residue cysteine 117 is the Proton donor of the active site. 2-(S-cysteinyl)pyruvic acid O-phosphothioketal is present on cysteine 117. UDP-N-acetyl-alpha-D-glucosamine is bound by residues 122 to 126 (RPVDL), aspartate 308, and leucine 330.

This sequence belongs to the EPSP synthase family. MurA subfamily.

The protein resides in the cytoplasm. The catalysed reaction is phosphoenolpyruvate + UDP-N-acetyl-alpha-D-glucosamine = UDP-N-acetyl-3-O-(1-carboxyvinyl)-alpha-D-glucosamine + phosphate. The protein operates within cell wall biogenesis; peptidoglycan biosynthesis. Its function is as follows. Cell wall formation. Adds enolpyruvyl to UDP-N-acetylglucosamine. This Helicobacter acinonychis (strain Sheeba) protein is UDP-N-acetylglucosamine 1-carboxyvinyltransferase.